Consider the following 473-residue polypeptide: ATP synthase subunit beta (473 aa).

153 to 160 serves as a coordination point for ATP; that stretch reads GGAGVGKT.

The protein belongs to the ATPase alpha/beta chains family. F-type ATPases have 2 components, CF(1) - the catalytic core - and CF(0) - the membrane proton channel. CF(1) has five subunits: alpha(3), beta(3), gamma(1), delta(1), epsilon(1). CF(0) has three main subunits: a(1), b(2) and c(9-12). The alpha and beta chains form an alternating ring which encloses part of the gamma chain. CF(1) is attached to CF(0) by a central stalk formed by the gamma and epsilon chains, while a peripheral stalk is formed by the delta and b chains.

It localises to the cell inner membrane. It catalyses the reaction ATP + H2O + 4 H(+)(in) = ADP + phosphate + 5 H(+)(out). Produces ATP from ADP in the presence of a proton gradient across the membrane. The catalytic sites are hosted primarily by the beta subunits. The polypeptide is ATP synthase subunit beta (Rickettsia canadensis (strain McKiel)).